The primary structure comprises 423 residues: Nucleoporin NUP42 (423 aa).

The C3H1-type zinc-finger motif lies at 1-25; sequence MAICQFFLQGRCRFGDRCWNEHPGA. Residues 14–15 form an FG 1 repeat; it reads FG. The tract at residues 24-85 is disordered; that stretch reads GARGAGGGRQ…EKPYFSSFDS (62 aa). The segment covering 40–69 has biased composition (polar residues); it reads SGNNRRGWNTTSQRYSNVIQPSSFSKSTPW. An interaction with HIV-1 Vpr region spans residues 94–170; that stretch reads GFGLSENPFA…EYHNFLTSNN (77 aa). The FG 2 repeat unit spans residues 95 to 96; it reads FG. Ser-106 is subject to Phosphoserine. FG repeat units follow at residues 218 to 219, 220 to 221, 265 to 266, 271 to 272, 288 to 289, 290 to 291, 311 to 312, 336 to 337, 345 to 346, and 364 to 365; these read FG. The segment at 365 to 423 is interaction with GLE1; the sequence is GNSSISTSLSASSSIIATDNVLFTPRDKLTVEELEQFQSKKFTLGKIPLKPPPLELLNV.

In terms of assembly, probable component of the nuclear pore complex (NPC). Interacts with nuclear export protein NXF1. Interacts with GLE1. Able to form a heterotrimer with NUP155 and GLE1 in vitro. Interacts with XPO1. (Microbial infection) Interacts with the HIV-1 virus proteins Rev and Vpr. The interaction with HIV-1 Rev, a protein that mediates nuclear export of unspliced viral RNAs, suggests that its function may be bypassed by the HIV-1 virus. In terms of processing, O-glycosylated. In terms of tissue distribution, ubiquitously expressed.

Its subcellular location is the nucleus. The protein resides in the nuclear pore complex. The protein localises to the nucleus membrane. Functionally, required for the export of mRNAs containing poly(A) tails from the nucleus into the cytoplasm. Its function is as follows. (Microbial infection) In case of infection by HIV-1, it may participate in the docking of viral Vpr at the nuclear envelope. This is Nucleoporin NUP42 from Homo sapiens (Human).